A 373-amino-acid chain; its full sequence is NADH-quinone oxidoreductase subunit D (373 aa).

It belongs to the complex I 49 kDa subunit family. In terms of assembly, NDH-1 is composed of 14 different subunits. Subunits NuoB, C, D, E, F, and G constitute the peripheral sector of the complex.

It localises to the cell inner membrane. The catalysed reaction is a quinone + NADH + 5 H(+)(in) = a quinol + NAD(+) + 4 H(+)(out). In terms of biological role, NDH-1 shuttles electrons from NADH, via FMN and iron-sulfur (Fe-S) centers, to quinones in the respiratory chain. The immediate electron acceptor for the enzyme in this species is believed to be ubiquinone. Couples the redox reaction to proton translocation (for every two electrons transferred, four hydrogen ions are translocated across the cytoplasmic membrane), and thus conserves the redox energy in a proton gradient. In Syntrophobacter fumaroxidans (strain DSM 10017 / MPOB), this protein is NADH-quinone oxidoreductase subunit D.